The chain runs to 554 residues: Heterochromatin protein 1-binding protein 3 (554 aa).

At alanine 2 the chain carries N-acetylalanine. Serine 6 is modified (phosphoserine). Disordered stretches follow at residues 30–136 (LGEK…KTIP) and 142–161 (SASQ…SPRP). Threonine 51 is subject to Phosphothreonine. A compositionally biased stretch (acidic residues) spans 60 to 71 (GEEEKPEPDGSS). Residue lysine 64 forms a Glycyl lysine isopeptide (Lys-Gly) (interchain with G-Cter in SUMO2) linkage. Phosphothreonine is present on residues glutamate 72 and threonine 85. Residues 72 to 93 (EESISTVEEQENETPPATSSEA) are compositionally biased toward polar residues. Over residues 94-129 (EQPKGEPESGEKEENNNKSAEEPKKDEKDQSKEKEK) the composition is skewed to basic and acidic residues. Lysine 97 is covalently cross-linked (Glycyl lysine isopeptide (Lys-Gly) (interchain with G-Cter in SUMO2)). The span at 142–156 (SASQLARAQRQTPMA) shows a compositional bias: polar residues. Serine 144, serine 157, and serine 158 each carry phosphoserine. An H15 1 domain is found at 159 to 234 (PRPKMDAILT…GASGSFVVVQ (76 aa)). Residue lysine 192 is modified to N6-acetyllysine. Residues 229 to 254 (SFVVVQKSKPPQKSKNRKKGSALDPE) form a disordered region. Residues 238–248 (PPQKSKNRKKG) show a composition bias toward basic residues. Serine 249 carries the post-translational modification Phosphoserine. The PxVxL motif motif lies at 255–259 (PQVKL). 2 consecutive H15 domains span residues 255–330 (PQVK…QLKK) and 337–413 (LGGS…QLSF). Lysine 258 is covalently cross-linked (Glycyl lysine isopeptide (Lys-Gly) (interchain with G-Cter in SUMO2)). The segment at 420–554 (GVLFPKKESG…AMKKSFKTKK (135 aa)) is disordered. The span at 430-451 (GSDDEDEDDDDDESSEDSEDEE) shows a compositional bias: acidic residues. 3 positions are modified to phosphoserine: serine 443, serine 444, and serine 447. The span at 464 to 475 (AKSQGKTASMKQ) shows a compositional bias: polar residues. Basic residues-rich tracts occupy residues 490–511 (GKVR…RKAR) and 544–554 (SAMKKSFKTKK).

As to quaternary structure, interacts (via PxVxL motif) with CBX5 (via Trp-174).

It localises to the nucleus. It is found in the chromosome. Its function is as follows. Component of heterochromatin that maintains heterochromatin integrity during G1/S progression and regulates the duration of G1 phase to critically influence cell proliferative capacity. May play a role in hypoxia-induced oncogenesis. The sequence is that of Heterochromatin protein 1-binding protein 3 (Hp1bp3) from Mus musculus (Mouse).